The sequence spans 42 residues: Protein Tat (42 aa).

The interaction with human CREBBP stretch occupies residues 1–24; it reads MEPVDPNLEPWNHPGSQPKTACNQ. A cysteine-rich region spans residues 22 to 37; it reads CNQCYCKKCSYHCLVC. Residue Lys28 is modified to N6-acetyllysine; by host PCAF.

The protein belongs to the lentiviruses Tat family. As to quaternary structure, interacts with host CCNT1. Associates with the P-TEFb complex composed at least of Tat, P-TEFb (CDK9 and CCNT1), TAR RNA, RNA Pol II. Recruits the HATs CREBBP, TAF1/TFIID, EP300, PCAF and GCN5L2. Interacts with host KAT5/Tip60; this interaction targets the latter to degradation. Interacts with the host deacetylase SIRT1. Interacts with host capping enzyme RNGTT; this interaction stimulates RNGTT. Binds to host KDR, and to the host integrins ITGAV/ITGB3 and ITGA5/ITGB1. Interacts with host KPNB1/importin beta-1 without previous binding to KPNA1/importin alpha-1. Interacts with EIF2AK2. Interacts with host nucleosome assembly protein NAP1L1; this interaction may be required for the transport of Tat within the nucleus, since the two proteins interact at the nuclear rim. Interacts with host C1QBP/SF2P32; this interaction involves lysine-acetylated Tat. Interacts with the host chemokine receptors CCR2, CCR3 and CXCR4. Interacts with host DPP4/CD26; this interaction may trigger an anti-proliferative effect. Interacts with host LDLR. Interacts with the host extracellular matrix metalloproteinase MMP1. Interacts with host PRMT6; this interaction mediates Tat's methylation. Interacts with, and is ubiquitinated by MDM2/Hdm2. Interacts with host PSMC3 and HTATIP2. Interacts with STAB1; this interaction may overcome SATB1-mediated repression of IL2 and IL2RA (interleukin) in T cells by binding to the same domain than HDAC1. Interacts (when acetylated) with human CDK13, thereby increasing HIV-1 mRNA splicing and promoting the production of the doubly spliced HIV-1 protein Nef. Interacts with host TBP; this interaction modulates the activity of transcriptional pre-initiation complex. Interacts with host RELA. Interacts with host PLSCR1; this interaction negatively regulates Tat transactivation activity by altering its subcellular distribution. In terms of processing, phosphorylated by EIF2AK2 on serine and threonine residues adjacent to the basic region important for TAR RNA binding and function. Phosphorylation of Tat by EIF2AK2 is dependent on the prior activation of EIF2AK2 by dsRNA. Post-translationally, asymmetrical arginine methylation by host PRMT6 seems to diminish the transactivation capacity of Tat and affects the interaction with host CCNT1. Polyubiquitination by host MDM2 does not target Tat to degradation, but activates its transactivation function and fosters interaction with CCNT1 and TAR RNA.

The protein localises to the host nucleus. Its subcellular location is the host nucleolus. It localises to the host cytoplasm. The protein resides in the secreted. In terms of biological role, transcriptional activator that increases RNA Pol II processivity, thereby increasing the level of full-length viral transcripts. Recognizes a hairpin structure at the 5'-LTR of the nascent viral mRNAs referred to as the transactivation responsive RNA element (TAR) and recruits the cyclin T1-CDK9 complex (P-TEFb complex) that will in turn hyperphosphorylate the RNA polymerase II to allow efficient elongation. The CDK9 component of P-TEFb and other Tat-activated kinases hyperphosphorylate the C-terminus of RNA Pol II that becomes stabilized and much more processive. Other factors such as HTATSF1/Tat-SF1, SUPT5H/SPT5, and HTATIP2 are also important for Tat's function. Besides its effect on RNA Pol II processivity, Tat induces chromatin remodeling of proviral genes by recruiting the histone acetyltransferases (HATs) CREBBP, EP300 and PCAF to the chromatin. This also contributes to the increase in proviral transcription rate, especially when the provirus integrates in transcriptionally silent region of the host genome. To ensure maximal activation of the LTR, Tat mediates nuclear translocation of NF-kappa-B by interacting with host RELA. Through its interaction with host TBP, Tat may also modulate transcription initiation. Tat can reactivate a latently infected cell by penetrating in it and transactivating its LTR promoter. In the cytoplasm, Tat is thought to act as a translational activator of HIV-1 mRNAs. Functionally, extracellular circulating Tat can be endocytosed by surrounding uninfected cells via the binding to several surface receptors such as CD26, CXCR4, heparan sulfate proteoglycans (HSPG) or LDLR. Neurons are rarely infected, but they internalize Tat via their LDLR. Through its interaction with nuclear HATs, Tat is potentially able to control the acetylation-dependent cellular gene expression. Modulates the expression of many cellular genes involved in cell survival, proliferation or in coding for cytokines or cytokine receptors. Tat plays a role in T-cell and neurons apoptosis. Tat induced neurotoxicity and apoptosis probably contribute to neuroAIDS. Circulating Tat also acts as a chemokine-like and/or growth factor-like molecule that binds to specific receptors on the surface of the cells, affecting many cellular pathways. In the vascular system, Tat binds to ITGAV/ITGB3 and ITGA5/ITGB1 integrins dimers at the surface of endothelial cells and competes with bFGF for heparin-binding sites, leading to an excess of soluble bFGF. The chain is Protein Tat from Human immunodeficiency virus type 1 group M subtype C (isolate ETH2220) (HIV-1).